The following is a 231-amino-acid chain: MLKRFFITGTDTSVGKTVVSRALLQALASSGKSVAGYKPVAKGSKETAEGMRNKDALVLQSVSSLELPYEAINPIALSEEESSVAHSCPINYTLLSNGLASLSDKVDHVVVEGTGGWRSLMNDLRPLSEWVVQEQLPVLMVVGIQEGCINHALLTAQAVANDGLPLIGWVANRINPGLAHYAEIIDVLGKKLPAPLIGELPYLPRAEQRELGQYIRLSMLGSVLAVDRIMA.

13 to 18 (SVGKTV) serves as a coordination point for ATP. Thr17 contacts Mg(2+). Residue Lys38 is part of the active site. ATP is bound by residues Asp55, 112–115 (EGTG), 172–173 (NR), 201–203 (PYL), and Gln208. Residues Asp55 and Glu112 each contribute to the Mg(2+) site.

This sequence belongs to the dethiobiotin synthetase family. As to quaternary structure, homodimer. The cofactor is Mg(2+).

The protein resides in the cytoplasm. It carries out the reaction (7R,8S)-7,8-diammoniononanoate + CO2 + ATP = (4R,5S)-dethiobiotin + ADP + phosphate + 3 H(+). It functions in the pathway cofactor biosynthesis; biotin biosynthesis; biotin from 7,8-diaminononanoate: step 1/2. Catalyzes a mechanistically unusual reaction, the ATP-dependent insertion of CO2 between the N7 and N8 nitrogen atoms of 7,8-diaminopelargonic acid (DAPA, also called 7,8-diammoniononanoate) to form a ureido ring. The polypeptide is ATP-dependent dethiobiotin synthetase BioD 2 (Salmonella typhimurium (strain LT2 / SGSC1412 / ATCC 700720)).